A 190-amino-acid chain; its full sequence is Nuclear transcription factor Y subunit B-2 (190 aa).

Positions 1–30 (MGDSDRDSGGGQNGNNQNGQSSLSPREQDR) are disordered. A DNA-binding region spans residues 32-38 (LPIANVS). A subunit association domain (SAD) region spans residues 59–70 (MQECVSEFISFV). Positions 168 to 190 (HMYGATGGGSDSGGGAASGRTRT) are disordered. Positions 172 to 184 (ATGGGSDSGGGAA) are enriched in gly residues.

Belongs to the NFYB/HAP3 subunit family. As to quaternary structure, heterotrimeric transcription factor composed of three components, NF-YA, NF-YB and NF-YC. NF-YB and NF-YC must interact and dimerize for NF-YA association and DNA binding. Binds directly with DPB3-1. In terms of tissue distribution, ubiquitous. Predominantly expressed in flowers and siliques.

It localises to the nucleus. In terms of biological role, component of the NF-Y/HAP transcription factor complex. The NF-Y complex stimulates the transcription of various genes by recognizing and binding to a CCAAT motif in promoters. This chain is Nuclear transcription factor Y subunit B-2, found in Arabidopsis thaliana (Mouse-ear cress).